Reading from the N-terminus, the 160-residue chain is Large ribosomal subunit protein eL21 (160 aa).

2 stretches are compositionally biased toward basic and acidic residues: residues asparagine 112 to glycine 123 and arginine 136 to lysine 146. The disordered stretch occupies residues asparagine 112 to lysine 146.

This sequence belongs to the eukaryotic ribosomal protein eL21 family. As to quaternary structure, component of the large ribosomal subunit.

It localises to the cytoplasm. The protein localises to the cytosol. It is found in the endoplasmic reticulum. Functionally, component of the large ribosomal subunit. The ribosome is a large ribonucleoprotein complex responsible for the synthesis of proteins in the cell. The polypeptide is Large ribosomal subunit protein eL21 (Rpl21) (Rattus norvegicus (Rat)).